The sequence spans 1264 residues: Valine--tRNA ligase (1264 aa).

Residue Ser2 is modified to N-acetylserine. The GST C-terminal domain maps to 89–219 (GSRAAVLVQQ…YSGARPLSHQ (131 aa)). The interval 217 to 296 (SHQPGPEAPA…GEKKDVSGPM (80 aa)) is disordered. 2 stretches are compositionally biased toward basic and acidic residues: residues 234-248 (LKKE…EKFQ) and 261-275 (GEKK…KRDP). The short motif at 344-354 (PNVTGSLHLGH) is the 'HIGH' region element. A phosphoserine mark is found at Ser437 and Ser527. Residue Lys645 is modified to N6-acetyllysine. The short motif at 862–866 (KMSKS) is the 'KMSKS' region element. An ATP-binding site is contributed by Lys865.

Belongs to the class-I aminoacyl-tRNA synthetase family. Forms high-molecular-mass aggregates with elongation factor 1.

It catalyses the reaction tRNA(Val) + L-valine + ATP = L-valyl-tRNA(Val) + AMP + diphosphate. Its activity is regulated as follows. Can be regulated by protein kinase C-dependent phosphorylation. In terms of biological role, catalyzes the attachment of valine to tRNA(Val). This chain is Valine--tRNA ligase, found in Homo sapiens (Human).